A 220-amino-acid chain; its full sequence is MAWSSSFLFIVLPLAAAVAVQPQDTELTFLLPAGRQECFYQTTLYNGSMEIEYQVIGGAGLDVDFSVTTPSGILLIMERRRSDGVHTVEPTEAGDYMICFDNSFSTISEKLVFFELIFDNQQGDEEPDSWADVVEPDELLDIKLEDIKESIESVKSRLERSIQMQTVLRAFEARDRNLQDSNLERVNFWSAINVGVLVTVAFLQVYMLKSLFDDKRKIRT.

The N-terminal stretch at 1 to 19 (MAWSSSFLFIVLPLAAAVA) is a signal peptide. Residues 20 to 187 (VQPQDTELTF…LQDSNLERVN (168 aa)) are Extracellular-facing. Residues 36–118 (QECFYQTTLY…EKLVFFELIF (83 aa)) enclose the GOLD domain. A coiled-coil region spans residues 138-164 (ELLDIKLEDIKESIESVKSRLERSIQM). Residues 188-208 (FWSAINVGVLVTVAFLQVYML) traverse the membrane as a helical segment. Residues 209-220 (KSLFDDKRKIRT) lie on the Cytoplasmic side of the membrane. Residues 211-212 (LF) carry the COPII vesicle coat-binding motif. Residues 211–220 (LFDDKRKIRT) carry the COPI vesicle coat-binding motif.

This sequence belongs to the EMP24/GP25L family. As to quaternary structure, homodimer in endoplasmic reticulum, endoplasmic reticulum-Golgi intermediate compartment and cis-Golgi network. Interacts with IL1RL1. Interacts with RNF26; this interaction is important to modulate innate immune signaling through the cGAS-STING pathway.

The protein localises to the cell membrane. It localises to the endoplasmic reticulum membrane. It is found in the golgi apparatus. The protein resides in the cis-Golgi network membrane. Its subcellular location is the endoplasmic reticulum-Golgi intermediate compartment membrane. In terms of biological role, potential role in vesicular protein trafficking, mainly in the early secretory pathway. May act as a cargo receptor at the lumenal side for incorporation of secretory cargo molecules into transport vesicles and may be involved in vesicle coat formation at the cytoplasmic side. Plays a positive role in IL-33-mediated IL-8 and IL-6 production by interacting with interleukin-33 receptor IL1RL1. Plays also a role in the modulation of innate immune signaling through the cGAS-STING pathway by interacting with RNF26. The sequence is that of Transmembrane emp24 domain-containing protein 1 (tmed1) from Xenopus tropicalis (Western clawed frog).